We begin with the raw amino-acid sequence, 485 residues long: 4-alpha-glucanotransferase (485 aa).

This sequence belongs to the disproportionating enzyme family.

It localises to the cytoplasm. The catalysed reaction is Transfers a segment of a (1-&gt;4)-alpha-D-glucan to a new position in an acceptor, which may be glucose or a (1-&gt;4)-alpha-D-glucan.. The polypeptide is 4-alpha-glucanotransferase (malQ) (Aquifex aeolicus (strain VF5)).